Consider the following 339-residue polypeptide: Dihydroorotate dehydrogenase (quinone) (339 aa).

FMN contacts are provided by residues 61 to 65 and Thr-85; that span reads AGLDK. A substrate-binding site is contributed by Lys-65. 110-114 provides a ligand contact to substrate; sequence NRMGF. Asn-138 and Asn-171 together coordinate FMN. Asn-171 lines the substrate pocket. Residue Ser-174 is the Nucleophile of the active site. Asn-176 is a binding site for substrate. Positions 216 and 244 each coordinate FMN. 245–246 is a binding site for substrate; sequence NT. FMN-binding positions include Gly-267, Gly-296, and 317–318; that span reads YS.

It belongs to the dihydroorotate dehydrogenase family. Type 2 subfamily. Monomer. The cofactor is FMN.

It localises to the cell membrane. It carries out the reaction (S)-dihydroorotate + a quinone = orotate + a quinol. The protein operates within pyrimidine metabolism; UMP biosynthesis via de novo pathway; orotate from (S)-dihydroorotate (quinone route): step 1/1. Its function is as follows. Catalyzes the conversion of dihydroorotate to orotate with quinone as electron acceptor. The protein is Dihydroorotate dehydrogenase (quinone) of Pseudomonas fluorescens (strain ATCC BAA-477 / NRRL B-23932 / Pf-5).